The chain runs to 317 residues: Probable deoxyhypusine synthase 1 (317 aa).

The active-site Nucleophile is the Lys285.

This sequence belongs to the deoxyhypusine synthase family. It depends on NAD(+) as a cofactor.

It catalyses the reaction [eIF5A protein]-L-lysine + spermidine = [eIF5A protein]-deoxyhypusine + propane-1,3-diamine. The protein operates within protein modification; eIF5A hypusination. Its function is as follows. Catalyzes the NAD-dependent oxidative cleavage of spermidine and the subsequent transfer of the butylamine moiety of spermidine to the epsilon-amino group of a specific lysine residue of the eIF-5A precursor protein to form the intermediate deoxyhypusine residue. This is Probable deoxyhypusine synthase 1 (dys1) from Methanosarcina acetivorans (strain ATCC 35395 / DSM 2834 / JCM 12185 / C2A).